The following is a 367-amino-acid chain: tRNA/tmRNA (uracil-C(5))-methyltransferase (367 aa).

S-adenosyl-L-methionine contacts are provided by Gln-190, Tyr-218, Asn-223, Glu-239, and Asp-299. The Nucleophile role is filled by Cys-324. The Proton acceptor role is filled by Glu-358.

The protein belongs to the class I-like SAM-binding methyltransferase superfamily. RNA M5U methyltransferase family. TrmA subfamily.

It carries out the reaction uridine(54) in tRNA + S-adenosyl-L-methionine = 5-methyluridine(54) in tRNA + S-adenosyl-L-homocysteine + H(+). The catalysed reaction is uridine(341) in tmRNA + S-adenosyl-L-methionine = 5-methyluridine(341) in tmRNA + S-adenosyl-L-homocysteine + H(+). In terms of biological role, dual-specificity methyltransferase that catalyzes the formation of 5-methyluridine at position 54 (m5U54) in all tRNAs, and that of position 341 (m5U341) in tmRNA (transfer-mRNA). The protein is tRNA/tmRNA (uracil-C(5))-methyltransferase of Pectobacterium atrosepticum (strain SCRI 1043 / ATCC BAA-672) (Erwinia carotovora subsp. atroseptica).